The primary structure comprises 282 residues: Undecaprenyl-diphosphatase (282 aa).

The next 7 membrane-spanning stretches (helical) occupy residues 40–60 (GAAF…MYFW), 85–105 (ARMG…GLLF), 115–135 (SLYW…LAEW), 153–173 (IGWK…IPGS), 193–213 (AARF…IFQL), 230–250 (LAAA…FLLS), and 258–278 (TIFI…LSTG).

The protein belongs to the UppP family.

Its subcellular location is the cell inner membrane. The enzyme catalyses di-trans,octa-cis-undecaprenyl diphosphate + H2O = di-trans,octa-cis-undecaprenyl phosphate + phosphate + H(+). In terms of biological role, catalyzes the dephosphorylation of undecaprenyl diphosphate (UPP). Confers resistance to bacitracin. The polypeptide is Undecaprenyl-diphosphatase (Chlorobium phaeovibrioides (strain DSM 265 / 1930) (Prosthecochloris vibrioformis (strain DSM 265))).